We begin with the raw amino-acid sequence, 345 residues long: Methylthioribose-1-phosphate isomerase (345 aa).

Residues 47–49, arginine 90, and glutamine 197 each bind substrate; that span reads RGA. The active-site Proton donor is aspartate 238. 248-249 contacts substrate; it reads NK.

It belongs to the eIF-2B alpha/beta/delta subunits family. MtnA subfamily.

It catalyses the reaction 5-(methylsulfanyl)-alpha-D-ribose 1-phosphate = 5-(methylsulfanyl)-D-ribulose 1-phosphate. The protein operates within amino-acid biosynthesis; L-methionine biosynthesis via salvage pathway; L-methionine from S-methyl-5-thio-alpha-D-ribose 1-phosphate: step 1/6. Catalyzes the interconversion of methylthioribose-1-phosphate (MTR-1-P) into methylthioribulose-1-phosphate (MTRu-1-P). The protein is Methylthioribose-1-phosphate isomerase of Caldanaerobacter subterraneus subsp. tengcongensis (strain DSM 15242 / JCM 11007 / NBRC 100824 / MB4) (Thermoanaerobacter tengcongensis).